A 410-amino-acid chain; its full sequence is LL-diaminopimelate aminotransferase (410 aa).

Residues Tyr15 and Gly42 each contribute to the substrate site. Pyridoxal 5'-phosphate is bound by residues Tyr72, 108 to 109 (AK), Tyr132, Asn187, Tyr218, and 246 to 248 (SFS). Positions 109, 132, and 187 each coordinate substrate. Position 249 is an N6-(pyridoxal phosphate)lysine (Lys249). Pyridoxal 5'-phosphate contacts are provided by Arg257 and Asn292. Substrate is bound by residues Asn292 and Arg388.

This sequence belongs to the class-I pyridoxal-phosphate-dependent aminotransferase family. LL-diaminopimelate aminotransferase subfamily. As to quaternary structure, homodimer. It depends on pyridoxal 5'-phosphate as a cofactor.

It carries out the reaction (2S,6S)-2,6-diaminopimelate + 2-oxoglutarate = (S)-2,3,4,5-tetrahydrodipicolinate + L-glutamate + H2O + H(+). The protein operates within amino-acid biosynthesis; L-lysine biosynthesis via DAP pathway; LL-2,6-diaminopimelate from (S)-tetrahydrodipicolinate (aminotransferase route): step 1/1. Its function is as follows. Involved in the synthesis of meso-diaminopimelate (m-DAP or DL-DAP), required for both lysine and peptidoglycan biosynthesis. Catalyzes the direct conversion of tetrahydrodipicolinate to LL-diaminopimelate. Is also able to catalyze the reverse reaction in vitro, i.e. the transamination of LL-diaminopimelate with 2-oxoglutarate to produce 2-oxo-6-aminopimelate (in equilibrium with tetrahydrodipicolinate) and glutamate. Has maximal aminotransferase activity using 2-oxoglutarate as an amino group acceptor, and cannot use oxaloacetate instead of 2-oxoglutarate, although 2-oxoadipate can substitute with 21% relative activity. Cannot use m-DAP, lysine or ornithine as the amino-group donor, when using 2-oxoglutarate as the amino-group acceptor. The chain is LL-diaminopimelate aminotransferase from Methanothermobacter thermautotrophicus (strain ATCC 29096 / DSM 1053 / JCM 10044 / NBRC 100330 / Delta H) (Methanobacterium thermoautotrophicum).